The chain runs to 49 residues: Large ribosomal subunit protein bL33B (49 aa).

The protein belongs to the bacterial ribosomal protein bL33 family.

This is Large ribosomal subunit protein bL33B from Bacillus licheniformis (strain ATCC 14580 / DSM 13 / JCM 2505 / CCUG 7422 / NBRC 12200 / NCIMB 9375 / NCTC 10341 / NRRL NRS-1264 / Gibson 46).